The sequence spans 354 residues: Methylthioribose-1-phosphate isomerase (354 aa).

Substrate is bound by residues 48–50 (RGA), Arg95, and Gln202. Residue Asp243 is the Proton donor of the active site. 253–254 (NK) contributes to the substrate binding site.

This sequence belongs to the eIF-2B alpha/beta/delta subunits family. MtnA subfamily.

The enzyme catalyses 5-(methylsulfanyl)-alpha-D-ribose 1-phosphate = 5-(methylsulfanyl)-D-ribulose 1-phosphate. It functions in the pathway amino-acid biosynthesis; L-methionine biosynthesis via salvage pathway; L-methionine from S-methyl-5-thio-alpha-D-ribose 1-phosphate: step 1/6. Its function is as follows. Catalyzes the interconversion of methylthioribose-1-phosphate (MTR-1-P) into methylthioribulose-1-phosphate (MTRu-1-P). This is Methylthioribose-1-phosphate isomerase from Roseiflexus castenholzii (strain DSM 13941 / HLO8).